Here is a 427-residue protein sequence, read N- to C-terminus: Putative FBD-associated F-box protein At3g50710 (427 aa).

An F-box domain is found at 1-53 (MDRISNLSDDLLLKIVSSLPTKDVVVTMLLSKRWKFLWMMVPKLRFDDEFELE). The FBD domain maps to 345-395 (HWEEPSSVPQCLLFHLNIFEWKYYNAGDEEKKVVAYILKNARQLKTATFSA).

In Arabidopsis thaliana (Mouse-ear cress), this protein is Putative FBD-associated F-box protein At3g50710.